Consider the following 337-residue polypeptide: D-alanine--D-alanine ligase (337 aa).

The 207-residue stretch at 124-330 (KMWFSALGIP…FTEYLSLVIN (207 aa)) folds into the ATP-grasp domain. An ATP-binding site is contributed by 154–209 (ALAQWGSIFVKAASQGSSVGCYKVDDSDKVAGVLKDAFGYAPYVIVEKTIKARELE). 3 residues coordinate Mg(2+): aspartate 284, glutamate 297, and asparagine 299.

Belongs to the D-alanine--D-alanine ligase family. Requires Mg(2+) as cofactor. The cofactor is Mn(2+).

It is found in the cytoplasm. The catalysed reaction is 2 D-alanine + ATP = D-alanyl-D-alanine + ADP + phosphate + H(+). It functions in the pathway cell wall biogenesis; peptidoglycan biosynthesis. Functionally, cell wall formation. This chain is D-alanine--D-alanine ligase, found in Shewanella baltica (strain OS195).